A 127-amino-acid chain; its full sequence is Large ribosomal subunit protein uL24A (127 aa).

The protein belongs to the universal ribosomal protein uL24 family. Component of the large ribosomal subunit (LSU). Mature yeast ribosomes consist of a small (40S) and a large (60S) subunit. The 40S small subunit contains 1 molecule of ribosomal RNA (18S rRNA) and 33 different proteins (encoded by 57 genes). The large 60S subunit contains 3 rRNA molecules (25S, 5.8S and 5S rRNA) and 46 different proteins (encoded by 81 genes).

It localises to the cytoplasm. Its function is as follows. Component of the ribosome, a large ribonucleoprotein complex responsible for the synthesis of proteins in the cell. The small ribosomal subunit (SSU) binds messenger RNAs (mRNAs) and translates the encoded message by selecting cognate aminoacyl-transfer RNA (tRNA) molecules. The large subunit (LSU) contains the ribosomal catalytic site termed the peptidyl transferase center (PTC), which catalyzes the formation of peptide bonds, thereby polymerizing the amino acids delivered by tRNAs into a polypeptide chain. The nascent polypeptides leave the ribosome through a tunnel in the LSU and interact with protein factors that function in enzymatic processing, targeting, and the membrane insertion of nascent chains at the exit of the ribosomal tunnel. The polypeptide is Large ribosomal subunit protein uL24A (Saccharomyces cerevisiae (strain ATCC 204508 / S288c) (Baker's yeast)).